Reading from the N-terminus, the 189-residue chain is Adenylate kinase (189 aa).

ATP is bound at residue 10 to 15 (GAGKGT). Positions 30–59 (STGDIFRANVSGGTELGKKAQAYMDRGDLV) are NMP. AMP-binding positions include T31, R36, 57–59 (DLV), 85–88 (GFPR), and Q92. The tract at residues 126-136 (ERARIDNRSDD) is LID. An ATP-binding site is contributed by R127. Positions 133 and 144 each coordinate AMP. G172 contributes to the ATP binding site.

The protein belongs to the adenylate kinase family. As to quaternary structure, monomer.

The protein localises to the cytoplasm. It carries out the reaction AMP + ATP = 2 ADP. The protein operates within purine metabolism; AMP biosynthesis via salvage pathway; AMP from ADP: step 1/1. Its function is as follows. Catalyzes the reversible transfer of the terminal phosphate group between ATP and AMP. Plays an important role in cellular energy homeostasis and in adenine nucleotide metabolism. This Thermobifida fusca (strain YX) protein is Adenylate kinase.